Reading from the N-terminus, the 134-residue chain is Fluoride-specific ion channel FluC 2 (134 aa).

4 consecutive transmembrane segments (helical) span residues Leu-10–Leu-30, Leu-43–Pro-63, Leu-67–Ala-87, and Phe-100–Leu-120. The Na(+) site is built by Gly-75 and Thr-78.

Belongs to the fluoride channel Fluc/FEX (TC 1.A.43) family.

It localises to the cell inner membrane. The catalysed reaction is fluoride(in) = fluoride(out). Its activity is regulated as follows. Na(+) is not transported, but it plays an essential structural role and its presence is essential for fluoride channel function. Fluoride-specific ion channel. Important for reducing fluoride concentration in the cell, thus reducing its toxicity. This chain is Fluoride-specific ion channel FluC 2, found in Synechococcus sp. (strain CC9902).